The primary structure comprises 154 residues: Lymphocyte antigen 6K (154 aa).

The signal sequence occupies residues 1 to 20 (MAFLVALLVVLGLQLVQSNA). A UPAR/Ly6 domain is found at 21-117 (LTCHVCEAQN…NGEGPPTDQL (97 aa)). Gly123 is lipidated: GPI-anchor amidated glycine. Residues 124 to 154 (KASGRRHRYIELLLTGFMVLTANGLSALCLL) constitute a propeptide, removed in mature form.

As to quaternary structure, interacts with ADAM3 and TEX101. As to expression, strongly expressed in testes and weakly expressed in the epididymis, ovary, and uterus. Expressed in testicular germ cells (TGCs). Expressed in the testicular seminiferous tubules, in spermatocytes, spermatids, and testicular spermatozoa.

Its subcellular location is the secreted. It localises to the cytoplasm. It is found in the cell membrane. The protein resides in the cytoplasmic vesicle. The protein localises to the secretory vesicle. Its subcellular location is the acrosome. It localises to the membrane raft. Functionally, required for sperm migration into the oviduct and male fertility by controlling binding of sperm to zona pellucida. May play a role in cell growth. This is Lymphocyte antigen 6K from Mus musculus (Mouse).